The primary structure comprises 426 residues: Histidine--tRNA ligase (426 aa).

This sequence belongs to the class-II aminoacyl-tRNA synthetase family. As to quaternary structure, homodimer.

It localises to the cytoplasm. It catalyses the reaction tRNA(His) + L-histidine + ATP = L-histidyl-tRNA(His) + AMP + diphosphate + H(+). In Streptococcus sanguinis (strain SK36), this protein is Histidine--tRNA ligase.